A 61-amino-acid polypeptide reads, in one-letter code: Large ribosomal subunit protein bL32 (61 aa).

Residues 1 to 16 (MAVPKRKTSPSRRGMR) are compositionally biased toward basic residues. The tract at residues 1–61 (MAVPKRKTSP…RQILKPKAEA (61 aa)) is disordered. Positions 28-44 (VEDKDSGELRRPHHLDL) are enriched in basic and acidic residues.

It belongs to the bacterial ribosomal protein bL32 family.

The polypeptide is Large ribosomal subunit protein bL32 (Xanthobacter autotrophicus (strain ATCC BAA-1158 / Py2)).